A 122-amino-acid polypeptide reads, in one-letter code: Large ribosomal subunit protein uL14 (122 aa).

This sequence belongs to the universal ribosomal protein uL14 family. As to quaternary structure, part of the 50S ribosomal subunit. Forms a cluster with proteins L3 and L19. In the 70S ribosome, L14 and L19 interact and together make contacts with the 16S rRNA in bridges B5 and B8.

Its function is as follows. Binds to 23S rRNA. Forms part of two intersubunit bridges in the 70S ribosome. In Xylella fastidiosa (strain M23), this protein is Large ribosomal subunit protein uL14.